The chain runs to 272 residues: GPN-loop GTPase 3 (272 aa).

13-18 (GAGKST) is a GTP binding site. The Gly-Pro-Asn (GPN)-loop; involved in dimer interface motif lies at 70 to 72 (GPN). 173–176 (SKLD) lines the GTP pocket.

This sequence belongs to the GPN-loop GTPase family. In terms of assembly, heterodimers with NPA3/GPN1 or GPN2. Binds to RNA polymerase II (RNAPII).

In terms of biological role, small GTPase required for proper nuclear localization of RNA polymerase II and III (RNAPII and RNAPIII). May act at an RNAP assembly step prior to nuclear import. Promotes sister chromatid separation during anaphase. The protein is GPN-loop GTPase 3 of Saccharomyces cerevisiae (strain ATCC 204508 / S288c) (Baker's yeast).